Consider the following 792-residue polypeptide: MASVAESSFPLLCQIKTQRRINSSTLRHSRVSYHDLPSGSLSFRSRSFVLGHRCKCVSRVEASGSDDDEPEDALQATIDKSKKVLAMQRNLLHQIAERRKLVSSIKESTPDLDDAKASSKQESASSVNANTDATKKEIMDGDANGSVSPSTYGKSSLSKEPEAKTFSPSTESLKNRKQSSASVISSSPVTSPQKPSDVATNGKPWSSVVASSVDPPYKPSSVMTSPEKTSDPVTSPGKPSKSRAGAFWSDPLPSYLTKAPQTSTMKTEKYVEKTPDVASSETNEPGKDEEKPPPLAGANVMNVILVAAECAPFSKTGGLGDVAGALPKSLARRGHRVMVVVPRYAEYAEAKDLGVRKRYKVAGQDMEVMYFHAFIDGVDFVFIDSPEFRHLSNNIYGGNRLDILKRMVLFCKAAVEVPWYVPCGGVCYGDGNLAFIANDWHTALLPVYLKAYYRDHGIMKYTRSVLVIHNIAHQGRGPVDDFSYVDLPSHYLDSFKLYDPVGGEHFNIFAAGLKAADRVLTVSHGYSWEVKTLEGGWGLHNIINENDWKFRGIVNGIDTQEWNPEFDTYLHSDDYTNYSLENLHIGKPQCKAALQKELGLPVRPDVPLIGFIGRLDHQKGVDLIAEAVPWMMSQDVQLVMLGTGRPDLEEVLRQMEHQYRDKARGWVGFSVKTAHRITAGADILLMPSRFEPCGLNQLYAMNYGTIPVVHAVGGLRDTVQQFDPYSETGLGWTFDSAEAGKLIHALGNCLLTYREYKESWEGLQRRGMTQDLSWDNAAEKYEEVLVAAKYHW.

Residues 1–55 (MASVAESSFPLLCQIKTQRRINSSTLRHSRVSYHDLPSGSLSFRSRSFVLGHRCK) constitute a chloroplast transit peptide. Residues 105-295 (IKESTPDLDD…GKDEEKPPPL (191 aa)) are disordered. Residues 145 to 156 (GSVSPSTYGKSS) show a composition bias toward polar residues. The segment covering 179-192 (SSASVISSSPVTSP) has biased composition (low complexity). A compositionally biased stretch (polar residues) spans 221-233 (SVMTSPEKTSDPV). The span at 266 to 275 (KTEKYVEKTP) shows a compositional bias: basic and acidic residues. Lysine 315 contacts ADP-alpha-D-glucose.

It belongs to the glycosyltransferase 1 family. Bacterial/plant glycogen synthase subfamily. Expressed in roots, leaves and flowers.

Its subcellular location is the plastid. The protein localises to the chloroplast. It localises to the amyloplast. The enzyme catalyses [(1-&gt;4)-alpha-D-glucosyl](n) + ADP-alpha-D-glucose = [(1-&gt;4)-alpha-D-glucosyl](n+1) + ADP + H(+). Its pathway is glycan biosynthesis; starch biosynthesis. Its function is as follows. Involved in the synthesis of glycan chains within amylopectin in leaves. Is required to produce chains with a degree of polymerization of 12 to 25 (DP12-DP25). This Arabidopsis thaliana (Mouse-ear cress) protein is Starch synthase 2, chloroplastic/amyloplastic (SS2).